The sequence spans 451 residues: Chromosomal replication initiator protein DnaA (451 aa).

Residues 1–77 are domain I, interacts with DnaA modulators; that stretch reads MTENEQIFWN…EVYNAQISVD (77 aa). Residues 77-110 form a domain II region; it reads DYVFEEDLMIEQNQTKINQKPKQQALNSLPTVTS. The interval 111–329 is domain III, AAA+ region; sequence DLNSKYSFEN…GALKDISLGA (219 aa). ATP is bound by residues Gly155, Gly157, Lys158, and Thr159. The interval 330–451 is domain IV, binds dsDNA; it reads NFKQIDTITV…EIETIKNKIK (122 aa).

The protein belongs to the DnaA family. As to quaternary structure, oligomerizes as a right-handed, spiral filament on DNA at oriC.

It is found in the cytoplasm. In terms of biological role, plays an essential role in the initiation and regulation of chromosomal replication. ATP-DnaA binds to the origin of replication (oriC) to initiate formation of the DNA replication initiation complex once per cell cycle. Binds the DnaA box (a 9 base pair repeat at the origin) and separates the double-stranded (ds)DNA. Forms a right-handed helical filament on oriC DNA; dsDNA binds to the exterior of the filament while single-stranded (ss)DNA is stabiized in the filament's interior. The ATP-DnaA-oriC complex binds and stabilizes one strand of the AT-rich DNA unwinding element (DUE), permitting loading of DNA polymerase. After initiation quickly degrades to an ADP-DnaA complex that is not apt for DNA replication. Binds acidic phospholipids. This is Chromosomal replication initiator protein DnaA from Streptococcus pyogenes serotype M49 (strain NZ131).